Here is a 484-residue protein sequence, read N- to C-terminus: Ectonucleoside triphosphate diphosphohydrolase 6 (484 aa).

Residues 1–39 (MKKGIRYETSRKTSYIFQQPQHGPWQTRMRKISNHGSLR) are Cytoplasmic-facing. The chain crosses the membrane as a helical; Signal-anchor for type II membrane protein span at residues 40–60 (VAKVAYPLGLCVGVFIYVAYI). At 61–484 (KWHRATATQA…SLNRQKSPAS (424 aa)) the chain is on the lumenal side. N-linked (GlcNAc...) asparagine glycosylation is present at Asn220. Glu224 serves as the catalytic Proton acceptor. An N-linked (GlcNAc...) asparagine glycan is attached at Asn284. Cystine bridges form between Cys325–Cys356 and Cys416–Cys430.

It belongs to the GDA1/CD39 NTPase family. As to quaternary structure, monomer. Ca(2+) is required as a cofactor. It depends on Mg(2+) as a cofactor. In terms of processing, the secreted form may be produced by intracellular processing. Post-translationally, N-glycosylated. Expressed in most tissues, but predominantly in heart.

It is found in the golgi apparatus membrane. The protein localises to the secreted. Its subcellular location is the cell membrane. It catalyses the reaction a ribonucleoside 5'-diphosphate + H2O = a ribonucleoside 5'-phosphate + phosphate + H(+). The catalysed reaction is IDP + H2O = IMP + phosphate + H(+). It carries out the reaction GDP + H2O = GMP + phosphate + H(+). The enzyme catalyses UDP + H2O = UMP + phosphate + H(+). With respect to regulation, glycosylation does not appear to be required for enzymatic activity. Catalyzes the hydrolysis of nucleoside triphosphates and diphosphates in a calcium- or magnesium-dependent manner. Has a strong preference for nucleoside diphosphates, preferentially hydrolyzes GDP, IDP, and UDP, with slower hydrolysis of CDP, ITP, GTP, CTP, ADP, and UTP and virtually no hydrolysis of ATP. The membrane bound form might support glycosylation reactions in the Golgi apparatus and, when released from cells, might catalyze the hydrolysis of extracellular nucleotides. This Homo sapiens (Human) protein is Ectonucleoside triphosphate diphosphohydrolase 6 (ENTPD6).